The primary structure comprises 332 residues: Holliday junction branch migration complex subunit RuvB (332 aa).

The interval 1-181 (MTRFLDSDAM…FGITGHMEYY (181 aa)) is large ATPase domain (RuvB-L). Residues L20, R21, G62, K65, T66, T67, 128–130 (EDF), R171, Y181, and R218 each bind ATP. Residue T66 participates in Mg(2+) binding. The small ATPAse domain (RuvB-S) stretch occupies residues 182-252 (EENDLTEIIE…ITDKALTMLD (71 aa)). The tract at residues 255–332 (HEGLDYVDQK…EHLGYQRFDK (78 aa)) is head domain (RuvB-H). DNA contacts are provided by R291, R310, R312, and R315.

Belongs to the RuvB family. Homohexamer. Forms an RuvA(8)-RuvB(12)-Holliday junction (HJ) complex. HJ DNA is sandwiched between 2 RuvA tetramers; dsDNA enters through RuvA and exits via RuvB. An RuvB hexamer assembles on each DNA strand where it exits the tetramer. Each RuvB hexamer is contacted by two RuvA subunits (via domain III) on 2 adjacent RuvB subunits; this complex drives branch migration. In the full resolvosome a probable DNA-RuvA(4)-RuvB(12)-RuvC(2) complex forms which resolves the HJ.

Its subcellular location is the cytoplasm. It catalyses the reaction ATP + H2O = ADP + phosphate + H(+). Its function is as follows. The RuvA-RuvB-RuvC complex processes Holliday junction (HJ) DNA during genetic recombination and DNA repair, while the RuvA-RuvB complex plays an important role in the rescue of blocked DNA replication forks via replication fork reversal (RFR). RuvA specifically binds to HJ cruciform DNA, conferring on it an open structure. The RuvB hexamer acts as an ATP-dependent pump, pulling dsDNA into and through the RuvAB complex. RuvB forms 2 homohexamers on either side of HJ DNA bound by 1 or 2 RuvA tetramers; 4 subunits per hexamer contact DNA at a time. Coordinated motions by a converter formed by DNA-disengaged RuvB subunits stimulates ATP hydrolysis and nucleotide exchange. Immobilization of the converter enables RuvB to convert the ATP-contained energy into a lever motion, pulling 2 nucleotides of DNA out of the RuvA tetramer per ATP hydrolyzed, thus driving DNA branch migration. The RuvB motors rotate together with the DNA substrate, which together with the progressing nucleotide cycle form the mechanistic basis for DNA recombination by continuous HJ branch migration. Branch migration allows RuvC to scan DNA until it finds its consensus sequence, where it cleaves and resolves cruciform DNA. The protein is Holliday junction branch migration complex subunit RuvB of Streptococcus agalactiae serotype Ia (strain ATCC 27591 / A909 / CDC SS700).